Here is a 313-residue protein sequence, read N- to C-terminus: Protein FixB (313 aa).

An FAD-binding site is contributed by 255-283 (LYLAVGISGQIQHMVGANASQTIFAINKD).

Belongs to the ETF alpha-subunit/FixB family. As to quaternary structure, heterodimer of FixA and FixB.

Its pathway is amine and polyamine metabolism; carnitine metabolism. Its function is as follows. Required for anaerobic carnitine reduction. May bring reductant to CaiA. The chain is Protein FixB from Shigella dysenteriae serotype 1 (strain Sd197).